Consider the following 141-residue polypeptide: Flagellar assembly factor FliW (141 aa).

It belongs to the FliW family. In terms of assembly, interacts with translational regulator CsrA and flagellin(s).

Its subcellular location is the cytoplasm. Functionally, acts as an anti-CsrA protein, binds CsrA and prevents it from repressing translation of its target genes, one of which is flagellin. Binds to flagellin and participates in the assembly of the flagellum. This chain is Flagellar assembly factor FliW, found in Clostridium botulinum (strain Alaska E43 / Type E3).